A 491-amino-acid chain; its full sequence is tRNA-2-methylthio-N(6)-dimethylallyladenosine synthase (491 aa).

One can recognise an MTTase N-terminal domain in the interval 3–119 (RSYQIRTYGC…LPTLLERARH (117 aa)). 6 residues coordinate [4Fe-4S] cluster: cysteine 12, cysteine 48, cysteine 82, cysteine 156, cysteine 160, and cysteine 163. The Radical SAM core domain maps to 142 to 372 (RESAYSGWVS…IELQNQISWD (231 aa)). The 72-residue stretch at 375–446 (KELVGRSVEL…PHHLVADSEI (72 aa)) folds into the TRAM domain.

The protein belongs to the methylthiotransferase family. MiaB subfamily. In terms of assembly, monomer. [4Fe-4S] cluster serves as cofactor.

It is found in the cytoplasm. It catalyses the reaction N(6)-dimethylallyladenosine(37) in tRNA + (sulfur carrier)-SH + AH2 + 2 S-adenosyl-L-methionine = 2-methylsulfanyl-N(6)-dimethylallyladenosine(37) in tRNA + (sulfur carrier)-H + 5'-deoxyadenosine + L-methionine + A + S-adenosyl-L-homocysteine + 2 H(+). Functionally, catalyzes the methylthiolation of N6-(dimethylallyl)adenosine (i(6)A), leading to the formation of 2-methylthio-N6-(dimethylallyl)adenosine (ms(2)i(6)A) at position 37 in tRNAs that read codons beginning with uridine. This is tRNA-2-methylthio-N(6)-dimethylallyladenosine synthase from Saccharopolyspora erythraea (strain ATCC 11635 / DSM 40517 / JCM 4748 / NBRC 13426 / NCIMB 8594 / NRRL 2338).